The chain runs to 117 residues: Large ribosomal subunit protein uL18 (117 aa).

The protein belongs to the universal ribosomal protein uL18 family. Part of the 50S ribosomal subunit; part of the 5S rRNA/L5/L18/L25 subcomplex. Contacts the 5S and 23S rRNAs.

Functionally, this is one of the proteins that bind and probably mediate the attachment of the 5S RNA into the large ribosomal subunit, where it forms part of the central protuberance. This chain is Large ribosomal subunit protein uL18, found in Vibrio atlanticus (strain LGP32) (Vibrio splendidus (strain Mel32)).